Reading from the N-terminus, the 336-residue chain is Potassium channel subfamily K member 1 (336 aa).

Residues 1 to 20 lie on the Cytoplasmic side of the membrane; sequence MLQSLAGSSCVRLVERHRSA. Residues 21–41 traverse the membrane as a helical segment; the sequence is WCFGFLVLGYLLYLVFGAVVF. Over 42 to 103 the chain is Extracellular; sequence SSVELPYEDL…SNASGNWNWD (62 aa). The N-linked (GlcNAc...) asparagine glycan is linked to Asn95. An intramembrane region (helical) is located at residues 104 to 116; that stretch reads FTSALFFASTVLS. The stretch at 117 to 122 is an intramembrane region; sequence TTGYGH. The interval 117-122 is selectivity filter 1; it reads TTGYGH. At 123-132 the chain is on the extracellular side; it reads TVPLSDGGKA. Residues 133–156 traverse the membrane as a helical segment; that stretch reads FCIIYSVIGIPFTLLFLTAVVQRV. Residues 157 to 181 are Cytoplasmic-facing; the sequence is TIHVTRRPVLYFHVRWGFSKQAVAI. The chain crosses the membrane as a helical span at residues 182-202; it reads VHAVLLGVVTVSCFFFIPAAV. Topologically, residues 203 to 211 are extracellular; the sequence is FSVLEDDWN. The segment at residues 212–224 is an intramembrane region (helical); the sequence is FLESFYFCFISLS. Positions 225 to 230 are selectivity filter 2; it reads TIGLGD. Residues 225 to 231 lie within the membrane without spanning it; it reads TIGLGDY. Over 232–243 the chain is Extracellular; it reads VPGEGYNQKFRE. A helical transmembrane segment spans residues 244-267; it reads LYKIGITCYLLLGLIAMLVVLETF. At 268 to 336 the chain is on the cytoplasmic side; the sequence is CELHELKKFR…PALADGASDH (69 aa). Residue Lys274 forms a Glycyl lysine isopeptide (Lys-Gly) (interchain with G-Cter in SUMO) linkage. The important for intracellular retention in recycling endosomes stretch occupies residues 293 to 299; it reads IIEHDQL. The disordered stretch occupies residues 307-336; that stretch reads QAAGVQEDQKQNEPFVSPQPPALADGASDH.

The protein belongs to the two pore domain potassium channel (TC 1.A.1.8) family. Homodimer; disulfide-linked. Heterodimer with KCNK2; disulfide-linked. In astrocytes, forms mostly heterodimeric potassium channels with KCNK2, with only a minor proportion of functional channels containing homodimeric KCNK1. Interacts with KCNK3 and KCNK9, forming functional heterodimeric channels. Interacts with GNG4. Identified in a complex with PSD and ARF6; interacts only with PSD that is bound to ARF6. Interacts with UBE2I. Post-translationally, sumoylation is controversial. Sumoylated by UBE2I. Not sumoylated when expressed in xenopus oocytes or mammalian cells. Sumoylation inactivates the channel, but does not interfere with expression at the cell membrane. Sumoylation of a single subunit is sufficient to silence the dimeric channel. Sumoylation of KCNK1 is sufficient to silence heterodimeric channels formed by KCNK1 and KCNK3 or KCNK9. Desumoylated by SENP1; this activates the channel. Desumoylated by SENP1; this strongly increases halothane-mediated activation of heterodimeric channels formed with KCNK9. SENP1 treatment has no effect.

The protein localises to the cell membrane. It localises to the recycling endosome. Its subcellular location is the synaptic cell membrane. It is found in the cytoplasmic vesicle. The protein resides in the perikaryon. The protein localises to the cell projection. It localises to the dendrite. Its subcellular location is the apical cell membrane. It catalyses the reaction K(+)(in) = K(+)(out). The enzyme catalyses NH4(+)(in) = NH4(+)(out). It carries out the reaction Na(+)(in) = Na(+)(out). The catalysed reaction is Rb(+)(in) = Rb(+)(out). It catalyses the reaction Cs(+)(in) = Cs(+)(out). The enzyme catalyses Li(+)(in) = Li(+)(out). It carries out the reaction L-glutamate(out) = L-glutamate(in). The catalysed reaction is chloride(in) = chloride(out). Ion channel that contributes to passive transmembrane potassium transport and to the regulation of the resting membrane potential in brain astrocytes, but also in kidney and in other tissues. Forms dimeric channels through which potassium ions pass in accordance with their electrochemical gradient. The channel is selective for K(+) ions at physiological potassium concentrations and at neutral pH, but becomes permeable to Na(+) at subphysiological K(+) levels and upon acidification of the extracellular medium. The homodimer has very low potassium channel activity, when expressed in heterologous systems, and can function as weakly inward rectifying potassium channel. Channel activity is modulated by activation of serotonin receptors. Heterodimeric channels containing KCNK1 and KCNK2 have much higher activity, and may represent the predominant form in astrocytes. Heterodimeric channels containing KCNK1 and KCNK3 or KCNK9 have much higher activity. Heterodimeric channels formed by KCNK1 and KCNK9 may contribute to halothane-sensitive currents. Mediates outward rectifying potassium currents in dentate gyrus granule cells and contributes to the regulation of their resting membrane potential. Contributes to the regulation of action potential firing in dentate gyrus granule cells and down-regulates their intrinsic excitability. In astrocytes, the heterodimer formed by KCNK1 and KCNK2 is required for rapid glutamate release in response to activation of G-protein coupled receptors, such as F2R and CNR1. Required for normal ion and water transport in the kidney. Contributes to the regulation of the resting membrane potential of pancreatic beta cells. The low channel activity of homodimeric KCNK1 may be due to sumoylation. The low channel activity may be due to rapid internalization from the cell membrane and retention in recycling endosomes. Permeable to monovalent cations with ion selectivity for K(+) &gt; Rb(+) &gt;&gt; NH4(+) &gt;&gt; Cs(+) = Na(+) = Li(+). In Bos taurus (Bovine), this protein is Potassium channel subfamily K member 1.